The sequence spans 159 residues: Carbohydrate sulfotransferase 15 (159 aa).

The Lumenal portion of the chain corresponds to 1 to 159 (SGTTDFYRRI…YQPHNERLVK (159 aa)). N-linked (GlcNAc...) asparagine glycosylation is found at Asn-42 and Asn-112.

This sequence belongs to the sulfotransferase 1 family. A divalent metal cation serves as cofactor. The cofactor is glutathione.

The protein localises to the golgi apparatus membrane. The enzyme catalyses dermatan 4'-sulfate + n 3'-phosphoadenylyl sulfate = dermatan 4',6'-bissulfate + n adenosine 3',5'-bisphosphate + n H(+). It catalyses the reaction chondroitin 4'-sulfate + n 3'-phosphoadenylyl sulfate = chondroitin 4',6'-bissulfate + n adenosine 3',5'-bisphosphate + n H(+). Its function is as follows. Sulfotransferase that transfers sulfate from 3'-phosphoadenosine 5'-phosphosulfate (PAPS) to the C-6 hydroxyl group of the GalNAc 4-sulfate residue of chondroitin sulfate A and forms chondroitin sulfate E containing GlcA-GalNAc(4,6-SO(4)) repeating units. This is Carbohydrate sulfotransferase 15 (GALNAC4S6ST) from Nototodarus sloanii (Wellington flying squid).